The sequence spans 475 residues: Protein arginine N-methyltransferase 2 (475 aa).

The tract at residues 167 to 194 (EFLSDDDDEEMDVDDDEEDESRDGEETG) is disordered. Residues 169-194 (LSDDDDEEMDVDDDEEDESRDGEETG) show a composition bias toward acidic residues. Positions 247–475 (LAGSQMDYLK…EDFYLPVCTF (229 aa)) constitute an RMT2 domain. S-adenosyl-L-methionine contacts are provided by residues Y254, M285, 310-315 (FGLGII), 331-333 (EAH), 358-359 (WQ), and D378.

The protein belongs to the class I-like SAM-binding methyltransferase superfamily. RMT2 methyltransferase family. As to quaternary structure, monomer.

The protein resides in the cytoplasm. It is found in the nucleus. Functionally, S-adenosyl-L-methionine-dependent protein-arginine N-methyltransferase that methylates the delta-nitrogen atom of arginine residues to form N5-methylarginine (type IV) in target proteins. Monomethylates ribosomal protein L12. The polypeptide is Protein arginine N-methyltransferase 2 (Yarrowia lipolytica (strain CLIB 122 / E 150) (Yeast)).